The primary structure comprises 431 residues: Na(+)-translocating NADH-quinone reductase subunit F (431 aa).

Residues 9-29 (FICIASLIFCAIGVILAGVIL) traverse the membrane as a helical segment. One can recognise a 2Fe-2S ferredoxin-type domain in the interval 39–133 (HPCKLKINDN…DMSLEIEERY (95 aa)). Residues Cys-76, Cys-82, Cys-85, and Cys-117 each contribute to the [2Fe-2S] cluster site. The FAD-binding FR-type domain occupies 136 to 286 (ASSWEGTVIS…SGPYGESFMK (151 aa)). Residues 289 to 413 (DRPLIFLIGG…PLHNSSILKL (125 aa)) are catalytic.

The protein belongs to the NqrF family. In terms of assembly, composed of six subunits; NqrA, NqrB, NqrC, NqrD, NqrE and NqrF. Requires [2Fe-2S] cluster as cofactor. FAD serves as cofactor.

It is found in the cell inner membrane. The enzyme catalyses a ubiquinone + n Na(+)(in) + NADH + H(+) = a ubiquinol + n Na(+)(out) + NAD(+). NQR complex catalyzes the reduction of ubiquinone-1 to ubiquinol by two successive reactions, coupled with the transport of Na(+) ions from the cytoplasm to the periplasm. The first step is catalyzed by NqrF, which accepts electrons from NADH and reduces ubiquinone-1 to ubisemiquinone by a one-electron transfer pathway. This is Na(+)-translocating NADH-quinone reductase subunit F from Chlamydia pneumoniae (Chlamydophila pneumoniae).